Reading from the N-terminus, the 303-residue chain is Glutamyl-Q tRNA(Asp) synthetase (303 aa).

Residues 16–20 (RFAPS) and Glu52 each bind L-glutamate. A 'HIGH' region motif is present at residues 19 to 29 (PSPSGPLHFGS). Zn(2+) is bound by residues Cys108, Cys110, Tyr122, and Cys126. Residues Tyr177 and Arg195 each contribute to the L-glutamate site. The 'KMSKS' region signature appears at 233–237 (KLSKQ). Lys236 is a binding site for ATP.

This sequence belongs to the class-I aminoacyl-tRNA synthetase family. GluQ subfamily. The cofactor is Zn(2+).

In terms of biological role, catalyzes the tRNA-independent activation of glutamate in presence of ATP and the subsequent transfer of glutamate onto a tRNA(Asp). Glutamate is transferred on the 2-amino-5-(4,5-dihydroxy-2-cyclopenten-1-yl) moiety of the queuosine in the wobble position of the QUC anticodon. The sequence is that of Glutamyl-Q tRNA(Asp) synthetase from Vibrio vulnificus (strain YJ016).